Consider the following 363-residue polypeptide: Inactive CLIP domain-containing serine protease A8 (363 aa).

The signal sequence occupies residues 1 to 25 (MPSWWCCCCLVVLLYAQRMIVPSSA). The Clip domain maps to 33–82 (LQECPGGFCSPKYLCPNGTYNEANAQNQEIIMLRFGEEDVCQDYMQVCCS). Cystine bridges form between Cys36–Cys80, Cys41–Cys73, and Cys47–Cys81. N-linked (GlcNAc...) asparagine glycosylation is found at Asn49, Asn83, Asn117, and Asn166. In terms of domain architecture, Peptidase S1 spans 114–360 (VEGNRTYAQY…FVTWINATIE (247 aa)). Intrachain disulfides connect Cys245-Cys317, Cys276-Cys297, and Cys307-Cys336. 2 N-linked (GlcNAc...) asparagine glycosylation sites follow: Asn319 and Asn356.

The protein belongs to the peptidase S1 family. CLIP subfamily. As to quaternary structure, heterodimer of a light chain and a heavy chain; disulfide-linked. In terms of processing, secreted as a full-length protein. Proteolytically cleaved into two chains which remain covalently linked. Cleavage is induced by Gram-positive or Gram-negative bacteria infection.

It is found in the secreted. In terms of biological role, inactive serine protease which plays an essential role in the innate immune response against bacteria, fungi and protozoa infection by activating the melanization cascade. In the melanization cascade, acts downstream of TEP1 and SPCLIP1 to promote CLIPA28 and CLIPC9 proteolytic cleavage and CLIPC9 recruitment to microbial surfaces. In the resistant strain L3-5, required for the melanization of killed parasite P.berghei ookinetes which results in their clearance. In the susceptible strain G3, appears to be dispensable for ookinete elimination which occurs by lysis. Required for the melanization of Gram-positive and Gram-negative bacteria. During the late stage of fungus B.bassiana-mediated infection, required for the initiation of hyphae melanization by promoting prophenoloxidase PPO activation. The polypeptide is Inactive CLIP domain-containing serine protease A8 (Anopheles gambiae (African malaria mosquito)).